Consider the following 536-residue polypeptide: Suppressor of cytokine signaling 5 (536 aa).

The tract at residues 1–50 is required for interaction with IL4R; it reads MDKVGKMWNNFKYRCQNLFGHEGGSRSENVDMNSNRCLSVKEKNISIGDS. Residues 115-175 form a disordered region; it reads SRHAPWGGKK…SVSSRTVGSR (61 aa). The span at 158 to 169 shows a compositional bias: low complexity; sequence VSSVHDMDSVSS. In terms of domain architecture, SH2 spans 381–476; sequence CYWGVMDRYE…FFEPLLTISL (96 aa). Residues 471–520 enclose the SOCS box domain; it reads LLTISLNRTFPFSLQYICRAVICRCTTYDGIDGLPLPSMLQDFLKEYHYK.

In terms of assembly, interacts with IL4R; inhibits IL4 signaling. Interacts with EGFR. Interacts with ELOB and ELOC; mediates EGFR ubiquitination and degradation. Phosphorylated. Phosphorylation is induced by EGF.

Its pathway is protein modification; protein ubiquitination. In terms of biological role, SOCS family proteins form part of a classical negative feedback system that regulates cytokine signal transduction. May be a substrate-recognition component of a SCF-like ECS (Elongin BC-CUL2/5-SOCS-box protein) E3 ubiquitin-protein ligase complex which mediates the ubiquitination and subsequent proteasomal degradation of target proteins. Inhibits for instance EGF signaling by mediating the degradation of the EGF receptor/EGFR. Involved in the regulation of T-helper cell differentiation by inhibiting of the IL4 signaling pathway which promotes differentiation into the Th2 phenotype. Can also partially inhibit IL6 and LIF signaling. The protein is Suppressor of cytokine signaling 5 (SOCS5) of Homo sapiens (Human).